A 1532-amino-acid polypeptide reads, in one-letter code: Glycogen debranching enzyme (1532 aa).

Serine 64 is subject to Phosphoserine. Active-site residues include aspartate 526, histidine 529, and aspartate 627.

It belongs to the glycogen debranching enzyme family. As to quaternary structure, monomer. Interacts with NHLRC1/malin. The N-terminus is blocked. In terms of processing, ubiquitinated. As to expression, liver, kidney and lymphoblastoid cells express predominantly isoform 1; whereas muscle and heart express not only isoform 1, but also muscle-specific isoform mRNAs (isoforms 2, 3 and 4). Isoforms 5 and 6 are present in both liver and muscle.

The protein resides in the cytoplasm. The catalysed reaction is Transfers a segment of a (1-&gt;4)-alpha-D-glucan to a new position in an acceptor, which may be glucose or a (1-&gt;4)-alpha-D-glucan.. The enzyme catalyses Hydrolysis of (1-&gt;6)-alpha-D-glucosidic branch linkages in glycogen phosphorylase limit dextrin.. Functionally, multifunctional enzyme acting as 1,4-alpha-D-glucan:1,4-alpha-D-glucan 4-alpha-D-glycosyltransferase and amylo-1,6-glucosidase in glycogen degradation. This is Glycogen debranching enzyme (AGL) from Homo sapiens (Human).